The primary structure comprises 238 residues: 2-phytyl-1,4-naphtoquinone methyltransferase (238 aa).

This sequence belongs to the class I-like SAM-binding methyltransferase superfamily. MenG/UbiE family.

The enzyme catalyses demethylphylloquinol + S-adenosyl-L-methionine = phylloquinol + S-adenosyl-L-homocysteine + H(+). The protein operates within cofactor biosynthesis; phylloquinone biosynthesis. Functionally, methyltransferase required for the conversion of 2-phytyl-1,4-beta-naphthoquinol to phylloquinol. This chain is 2-phytyl-1,4-naphtoquinone methyltransferase, found in Synechocystis sp. (strain ATCC 27184 / PCC 6803 / Kazusa).